The sequence spans 137 residues: QVLVLDGRGHLLGRLAAIVAKQVLLGRKVVVVRCEGINISGNFYRNKLKYLAFLRKRMNTNPSRGPYHFRAPSRIFWRTVRGMLPHKTKRGQAALDRLKVFDGIPPPYDKKKRMVVPAALKVVRLKLTGKFXYLGRL.

Residue arginine 55 is modified to Citrulline. Serine 73 is modified (phosphoserine). The residue at position 136 (arginine 136) is a Citrulline.

It belongs to the universal ribosomal protein uL13 family. In terms of assembly, component of the 60S ribosome. Component of the GAIT complex. Interacts with EIF4G1. Post-translationally, phosphorylation at Ser-73 upon interferon-gamma treatment in macrophages involves a DAPK1-DAPK3 kinase cascade and is causing release from the ribosome, association with the GAIT complex and subsequent involvement in transcript-selective translation inhibition. In terms of processing, citrullinated by PADI4.

It is found in the cytoplasm. Associated with ribosomes but is not required for canonical ribosome function and has extra-ribosomal functions. Component of the GAIT (gamma interferon-activated inhibitor of translation) complex which mediates interferon-gamma-induced transcript-selective translation inhibition in inflammation processes. Upon interferon-gamma activation and subsequent phosphorylation dissociates from the ribosome and assembles into the GAIT complex which binds to stem loop-containing GAIT elements in the 3'-UTR of diverse inflammatory mRNAs (such as ceruplasmin) and suppresses their translation. In the GAIT complex interacts with m7G cap-bound eIF4G at or near the eIF3-binding site and blocks the recruitment of the 43S ribosomal complex. Involved in methylation of rRNA. This is Large ribosomal subunit protein uL13 (RPL13A) from Sus scrofa (Pig).